The primary structure comprises 86 residues: Small ribosomal subunit protein uS17 (86 aa).

The protein belongs to the universal ribosomal protein uS17 family. As to quaternary structure, part of the 30S ribosomal subunit.

In terms of biological role, one of the primary rRNA binding proteins, it binds specifically to the 5'-end of 16S ribosomal RNA. This chain is Small ribosomal subunit protein uS17, found in Halalkalibacterium halodurans (strain ATCC BAA-125 / DSM 18197 / FERM 7344 / JCM 9153 / C-125) (Bacillus halodurans).